The following is a 20-amino-acid chain: RGSXLTIHPLRNIRDFFYVG.

It belongs to the peptidase A1 family. N-glycosylated. In terms of tissue distribution, expressed in chorionic epithelium (trophectoderm).

It localises to the secreted. This Bubalus bubalis (Domestic water buffalo) protein is Pregnancy-associated glycoprotein 75.